Consider the following 298-residue polypeptide: GTPase Era (298 aa).

Residues 8 to 176 enclose the Era-type G domain; that stretch reads HCGSVAVIGR…VRDVLALLPE (169 aa). Positions 16–23 are G1; it reads GRPNVGKS. 16-23 is a binding site for GTP; sequence GRPNVGKS. Residues 42–46 are G2; the sequence is QTTRH. A G3 region spans residues 63–66; the sequence is DTPG. GTP is bound by residues 63–67 and 125–128; these read DTPGL and NKID. The tract at residues 125–128 is G4; that stretch reads NKID. The segment at 155–157 is G5; it reads ISA. One can recognise a KH type-2 domain in the interval 199–283; it reads VREQLMRQLG…FLETWVRVRE (85 aa).

It belongs to the TRAFAC class TrmE-Era-EngA-EngB-Septin-like GTPase superfamily. Era GTPase family. Monomer.

Its subcellular location is the cytoplasm. It localises to the cell inner membrane. Functionally, an essential GTPase that binds both GDP and GTP, with rapid nucleotide exchange. Plays a role in 16S rRNA processing and 30S ribosomal subunit biogenesis and possibly also in cell cycle regulation and energy metabolism. This Stenotrophomonas maltophilia (strain R551-3) protein is GTPase Era.